The sequence spans 146 residues: Large ribosomal subunit protein uL13 (146 aa).

The segment at 125-146 (YAGPKHPHAAQQPKVYEPRPRG) is disordered.

Belongs to the universal ribosomal protein uL13 family. As to quaternary structure, part of the 50S ribosomal subunit.

This protein is one of the early assembly proteins of the 50S ribosomal subunit, although it is not seen to bind rRNA by itself. It is important during the early stages of 50S assembly. The polypeptide is Large ribosomal subunit protein uL13 (Roseiflexus sp. (strain RS-1)).